Reading from the N-terminus, the 549-residue chain is Eukaryotic translation initiation factor 4B2 (549 aa).

Disordered regions lie at residues 1-446 and 465-549; these read MSKP…DLIR and FRPR…REGW. The segment covering 24-46 has biased composition (low complexity); the sequence is AEATATAADSQSFPSLKEAATAK. 2 stretches are compositionally biased toward gly residues: residues 96-109 and 126-136; these read RLGG…GGRS and SWGGGGGGRRS. Positions 169-176 match the Nuclear localization signal 1 motif; that stretch reads GKKSLPSF. The segment covering 184 to 218 has biased composition (gly residues); it reads RYGGGGGSFGGGGGGGAGSYGGGGAGAGSGGGGGF. The Nuclear localization signal 2 signature appears at 234–241; it reads SSTFGSGF. A compositionally biased stretch (basic and acidic residues) spans 263–278; it reads QEERRRLVFEPRKADT. Residues 281–292 are compositionally biased toward polar residues; it reads SETPTAVKTSKP. A compositionally biased stretch (basic and acidic residues) spans 299-323; sequence RPREQVLAEKGLDWKKLDSDIEAKK. Positions 327-349 are enriched in low complexity; the sequence is SRPSSAQSSRPSSAQSNRSESSA. 3 stretches are compositionally biased toward basic and acidic residues: residues 369–431, 485–507, and 518–549; these read AKPR…KESQ, ERPH…ERPR, and PVDD…REGW.

The protein belongs to the eIF-4 subunit B family. As to quaternary structure, homodimer. Nonspherical monomer. mRNA-discriminating component of initiation complexes. Post-translationally, phosphorylated.

Its subcellular location is the nucleus. Promotes the eIF4F and eIF4A RNA-dependent ATP-hydrolysis activity with different efficiency depending on mRNAs, thus providing mRNA discrimination during initiation of translation. The polypeptide is Eukaryotic translation initiation factor 4B2 (Arabidopsis thaliana (Mouse-ear cress)).